Consider the following 521-residue polypeptide: CDP-diacylglycerol--glycerol-3-phosphate 3-phosphatidyltransferase (521 aa).

91-98 (ASLYLGKS) is a binding site for ATP. PLD phosphodiesterase domains lie at 177–203 (GLGLQHMKIYGFDNEVILSGANLSNDY) and 419–457 (NGWSYHAKGIWLSARDKNDANNWKPFITVIGSSNYTRRA). Active-site residues include histidine 182, lysine 184, and aspartate 189.

The protein belongs to the CDP-alcohol phosphatidyltransferase class-II family.

The protein resides in the mitochondrion. It catalyses the reaction a CDP-1,2-diacyl-sn-glycerol + sn-glycerol 3-phosphate = a 1,2-diacyl-sn-glycero-3-phospho-(1'-sn-glycero-3'-phosphate) + CMP + H(+). Its pathway is phospholipid metabolism; phosphatidylglycerol biosynthesis; phosphatidylglycerol from CDP-diacylglycerol: step 1/2. Its function is as follows. Essential for the viability of mitochondrial petite mutant. Catalyzes the committed step to the synthesis of the acidic phospholipids. The chain is CDP-diacylglycerol--glycerol-3-phosphate 3-phosphatidyltransferase (PGS1) from Saccharomyces cerevisiae (strain ATCC 204508 / S288c) (Baker's yeast).